The primary structure comprises 431 residues: Helix-loop-helix protein 11 (431 aa).

The tract at residues 88–109 is disordered; it reads LANRSLSQPAPLSPTSLDPDRR. Residues 91-103 are compositionally biased toward polar residues; the sequence is RSLSQPAPLSPTS. The 52-residue stretch at 112–163 folds into the bHLH domain; sequence MRRQIANCNERRRMQSINAGFLALRALLPRKEGEKLSKAAILQQTADMVHQL. Composition is skewed to polar residues over residues 226 to 241 and 248 to 257; these read TTTSSQASSPVTPRSN and LPSSYASSAL. The interval 226–311 is disordered; the sequence is TTTSSQASSP…PPPTLPSLET (86 aa). A compositionally biased stretch (low complexity) spans 274–291; the sequence is TTSTPLSLLTLNGSPTSS.

As to expression, expressed in the pharynx, nerve cords, the H-shaped excretory cell, vulva muscles, and the anal depressor (at protein level). Expressed in the intestine (at protein level). In males, it is also expressed in the spicules and hyp7 cells of the hypodermis (at protein level).

It is found in the nucleus. Functionally, transcriptional regulator. Component of a feedback loop involving atfs-1, atgl-1 and hlh-11. Binds to the promoter of the atgl-1 lipase to negatively regulate the expression of atgl-1, and thereby promoting fat oxidation in response to mitochondrial stress and mitochondrial respiration in the intestine. In addition, functions with atfs-1 to maintain lifespan. May have a role in fertility and in positively regulating body size. This chain is Helix-loop-helix protein 11, found in Caenorhabditis elegans.